We begin with the raw amino-acid sequence, 322 residues long: MRVVFFGTPEFALPSLQILLQPQSPFEVVGLVCQPDRPQGRGQKVLPPPTKVLAQAHGIPVWQPVRLRRDPQVLAALEALAADVFVVVAYGQILPLTVLQMPKLGCVNVHGSLLPAYRGAAPIQWAIANGETETGVTTMLMDEGMDTGAILLQAKLPIGPEQTSLELAPQLAQLGAELLVETLLKLEKGELTPIPQDGSRATYAPLLKKQDFHLDWQRPAQALHNQIRAFSPNCFTGIEGQRIKIVRSASPQLHSPPPEIPQGSPGEVVGLARGEGIYVATGEGSLLIRRAQLPGKKEQSAWDLVNGGQLKVGMRFEPLPNS.

Residue 112–115 (SLLP) coordinates (6S)-5,6,7,8-tetrahydrofolate.

Belongs to the Fmt family.

It catalyses the reaction L-methionyl-tRNA(fMet) + (6R)-10-formyltetrahydrofolate = N-formyl-L-methionyl-tRNA(fMet) + (6S)-5,6,7,8-tetrahydrofolate + H(+). Functionally, attaches a formyl group to the free amino group of methionyl-tRNA(fMet). The formyl group appears to play a dual role in the initiator identity of N-formylmethionyl-tRNA by promoting its recognition by IF2 and preventing the misappropriation of this tRNA by the elongation apparatus. This is Methionyl-tRNA formyltransferase from Synechococcus sp. (strain JA-2-3B'a(2-13)) (Cyanobacteria bacterium Yellowstone B-Prime).